The sequence spans 315 residues: Acetyl-coenzyme A carboxylase carboxyl transferase subunit alpha (315 aa).

In terms of domain architecture, CoA carboxyltransferase C-terminal spans 38–292 (RLQKKSNELT…KLRLKEDLAE (255 aa)).

This sequence belongs to the AccA family. Acetyl-CoA carboxylase is a heterohexamer composed of biotin carboxyl carrier protein (AccB), biotin carboxylase (AccC) and two subunits each of ACCase subunit alpha (AccA) and ACCase subunit beta (AccD).

It localises to the cytoplasm. It catalyses the reaction N(6)-carboxybiotinyl-L-lysyl-[protein] + acetyl-CoA = N(6)-biotinyl-L-lysyl-[protein] + malonyl-CoA. It functions in the pathway lipid metabolism; malonyl-CoA biosynthesis; malonyl-CoA from acetyl-CoA: step 1/1. Its function is as follows. Component of the acetyl coenzyme A carboxylase (ACC) complex. First, biotin carboxylase catalyzes the carboxylation of biotin on its carrier protein (BCCP) and then the CO(2) group is transferred by the carboxyltransferase to acetyl-CoA to form malonyl-CoA. The polypeptide is Acetyl-coenzyme A carboxylase carboxyl transferase subunit alpha (Haemophilus influenzae (strain PittEE)).